The sequence spans 106 residues: Large ribosomal subunit protein uL24 (106 aa).

Residues 84–97 (EKIGRELGAKEKAR) are compositionally biased toward basic and acidic residues. Residues 84–106 (EKIGRELGAKEKARLQKRKTAAK) are disordered.

It belongs to the universal ribosomal protein uL24 family. Part of the 50S ribosomal subunit.

In terms of biological role, one of two assembly initiator proteins, it binds directly to the 5'-end of the 23S rRNA, where it nucleates assembly of the 50S subunit. One of the proteins that surrounds the polypeptide exit tunnel on the outside of the subunit. This chain is Large ribosomal subunit protein uL24, found in Anaeromyxobacter dehalogenans (strain 2CP-1 / ATCC BAA-258).